The primary structure comprises 774 residues: Shugoshin (774 aa).

A coiled-coil region spans residues Ser41–Leu105. Disordered stretches follow at residues Gly106 to Arg151, Ser205 to Leu661, and Cys676 to Leu774. The segment covering Pro109 to Tyr120 has biased composition (basic and acidic residues). Residues Ala214 to Glu224 show a composition bias toward acidic residues. The segment covering Gly297–Glu318 has biased composition (polar residues). Residues Lys382 to Val398 are compositionally biased toward basic and acidic residues. Residues Glu399 to Phe409 are compositionally biased toward polar residues. 2 stretches are compositionally biased toward basic and acidic residues: residues Asn482–Phe495 and Phe549–Gln558. 2 stretches are compositionally biased toward polar residues: residues Pro595–Asn604 and Gln640–Thr651. Low complexity predominate over residues Ala706–Pro722. A compositionally biased stretch (acidic residues) spans Leu743–Gly754. Residues Arg765 to Leu774 are compositionally biased toward basic residues.

It belongs to the shugoshin family.

Its subcellular location is the nucleus. It localises to the chromosome. The protein resides in the centromere. Its function is as follows. Plays a central role in chromosome cohesion during cell division by preventing premature dissociation of cohesin complex from centromeres after prophase, when most of cohesin complex dissociates from chromosomes arms. The sequence is that of Shugoshin (sgo-1) from Neurospora crassa (strain ATCC 24698 / 74-OR23-1A / CBS 708.71 / DSM 1257 / FGSC 987).